A 355-amino-acid chain; its full sequence is Peptide chain release factor 1 (355 aa).

Gln234 carries the post-translational modification N5-methylglutamine.

Belongs to the prokaryotic/mitochondrial release factor family. Post-translationally, methylated by PrmC. Methylation increases the termination efficiency of RF1.

It is found in the cytoplasm. Peptide chain release factor 1 directs the termination of translation in response to the peptide chain termination codons UAG and UAA. The sequence is that of Peptide chain release factor 1 from Metamycoplasma arthritidis (strain 158L3-1) (Mycoplasma arthritidis).